The sequence spans 618 residues: Kelch-like protein 40b (618 aa).

Residues 33 to 100 enclose the BTB domain; that stretch reads VDCVLKIKDK…LYTSNINVTE (68 aa). Residues 135-237 form the BACK domain; that stretch reads CLAIFRLGLM…PRDYFVKNVE (103 aa). Residues 264–284 are compositionally biased toward basic and acidic residues; the sequence is PELKKTKNKKSPSEEGQKKGD. The disordered stretch occupies residues 264 to 297; the sequence is PELKKTKNKKSPSEEGQKKGDEEEVEEEEEQEER. The segment covering 285 to 295 has biased composition (acidic residues); it reads EEEVEEEEEQE. 5 Kelch repeats span residues 356-408, 409-458, 459-506, 508-553, and 555-608; these read QIFV…EAEN, FIFV…SHNE, MIYV…IHKN, IYVV…SVSG, and LYAV…VLGV.

The protein belongs to the KLHL40 family. In terms of assembly, component of the BCR(KLHL40) E3 ubiquitin ligase complex. In terms of tissue distribution, expressed in skeletal muscle. Detected in the eye at much lower levels.

The protein localises to the cytoplasm. It is found in the myofibril. The protein resides in the sarcomere. It localises to the a band. Its subcellular location is the i band. Its function is as follows. Substrate-specific adapter of a BCR (BTB-CUL3-RBX1) E3 ubiquitin ligase complex. Required for skeletal muscle development. This chain is Kelch-like protein 40b (klhl40b), found in Danio rerio (Zebrafish).